A 103-amino-acid polypeptide reads, in one-letter code: MSLLEQVSVSKKANIYFDGKVASRSVFLADGSKQTLGVVLPGEYEFSTSQGEVMEVTSGRFEVLLPESTVWQEFSEGTQFELAANVSFKIRNTAIAEYCCSYL.

It belongs to the nucleoside phosphorylase PpnP family.

The catalysed reaction is a purine D-ribonucleoside + phosphate = a purine nucleobase + alpha-D-ribose 1-phosphate. It catalyses the reaction adenosine + phosphate = alpha-D-ribose 1-phosphate + adenine. It carries out the reaction cytidine + phosphate = cytosine + alpha-D-ribose 1-phosphate. The enzyme catalyses guanosine + phosphate = alpha-D-ribose 1-phosphate + guanine. The catalysed reaction is inosine + phosphate = alpha-D-ribose 1-phosphate + hypoxanthine. It catalyses the reaction thymidine + phosphate = 2-deoxy-alpha-D-ribose 1-phosphate + thymine. It carries out the reaction uridine + phosphate = alpha-D-ribose 1-phosphate + uracil. The enzyme catalyses xanthosine + phosphate = alpha-D-ribose 1-phosphate + xanthine. In terms of biological role, catalyzes the phosphorolysis of diverse nucleosides, yielding D-ribose 1-phosphate and the respective free bases. Can use uridine, adenosine, guanosine, cytidine, thymidine, inosine and xanthosine as substrates. Also catalyzes the reverse reactions. In Shewanella sp. (strain W3-18-1), this protein is Pyrimidine/purine nucleoside phosphorylase.